Consider the following 345-residue polypeptide: Histidinol-phosphate aminotransferase (345 aa).

Residue Lys-206 is modified to N6-(pyridoxal phosphate)lysine.

Belongs to the class-II pyridoxal-phosphate-dependent aminotransferase family. Histidinol-phosphate aminotransferase subfamily. Homodimer. It depends on pyridoxal 5'-phosphate as a cofactor.

The catalysed reaction is L-histidinol phosphate + 2-oxoglutarate = 3-(imidazol-4-yl)-2-oxopropyl phosphate + L-glutamate. It functions in the pathway amino-acid biosynthesis; L-histidine biosynthesis; L-histidine from 5-phospho-alpha-D-ribose 1-diphosphate: step 7/9. The polypeptide is Histidinol-phosphate aminotransferase (Bacteroides fragilis (strain ATCC 25285 / DSM 2151 / CCUG 4856 / JCM 11019 / LMG 10263 / NCTC 9343 / Onslow / VPI 2553 / EN-2)).